Here is a 461-residue protein sequence, read N- to C-terminus: Kynurenine 3-monooxygenase (461 aa).

2 helical membrane-spanning segments follow: residues 395 to 415 (GFMNAIFPKSWIPLYSMVTFT) and 432 to 452 (ILSNLWKTTSTLALIGAAIGI).

The protein belongs to the aromatic-ring hydroxylase family. KMO subfamily. The cofactor is FAD.

The protein resides in the mitochondrion. Its subcellular location is the membrane. It catalyses the reaction L-kynurenine + NADPH + O2 + H(+) = 3-hydroxy-L-kynurenine + NADP(+) + H2O. It participates in cofactor biosynthesis; NAD(+) biosynthesis; quinolinate from L-kynurenine: step 1/3. Its function is as follows. Catalyzes the hydroxylation of L-kynurenine (L-Kyn) to form 3-hydroxy-L-kynurenine (L-3OHKyn). Required for synthesis of quinolinic acid. In Caenorhabditis briggsae, this protein is Kynurenine 3-monooxygenase.